The primary structure comprises 113 residues: Prefoldin subunit beta (113 aa).

The protein belongs to the prefoldin subunit beta family. Heterohexamer of two alpha and four beta subunits.

Its subcellular location is the cytoplasm. Functionally, molecular chaperone capable of stabilizing a range of proteins. Seems to fulfill an ATP-independent, HSP70-like function in archaeal de novo protein folding. The sequence is that of Prefoldin subunit beta from Methanococcus maripaludis (strain C6 / ATCC BAA-1332).